Reading from the N-terminus, the 484-residue chain is Zinc metalloproteinase-disintegrin stejnitin (484 aa).

Positions 1–20 are cleaved as a signal peptide; sequence MIQVLLVTICLAVFPYQGNS. Residues 21–192 constitute a propeptide that is removed on maturation; the sequence is IILESGNVND…ASQLNLTPDE (172 aa). Gln-193 is subject to Pyrrolidone carboxylic acid. The 199-residue stretch at 194-392 folds into the Peptidase M12B domain; sequence RFIELVIVAD…YTSRCLYNGP (199 aa). Residue Glu-197 participates in Ca(2+) binding. Residue Asn-254 is glycosylated (N-linked (GlcNAc...) asparagine). Asp-281 contacts Ca(2+). Cystine bridges form between Cys-305–Cys-387, Cys-345–Cys-369, and Cys-347–Cys-352. 3 residues coordinate Zn(2+): His-330, His-334, and His-340. Ca(2+) contacts are provided by Cys-387, Asn-390, Val-402, Asn-405, Glu-409, Glu-412, and Asp-415. The region spanning 400–484 is the Disintegrin domain; sequence PPVCGNYYVE…GDCPRNPFRA (85 aa). 7 disulfide bridges follow: Cys-403–Cys-422, Cys-414–Cys-432, Cys-416–Cys-427, Cys-426–Cys-449, Cys-440–Cys-446, Cys-445–Cys-470, and Cys-458–Cys-477. A Cell attachment site motif is present at residues 462-464; sequence KGD.

The protein belongs to the venom metalloproteinase (M12B) family. P-II subfamily. P-IIb sub-subfamily. Requires Zn(2+) as cofactor. Post-translationally, the N-terminus is blocked. In terms of tissue distribution, expressed by the venom gland.

It localises to the secreted. Its function is as follows. Snake venom zinc metalloproteinase that inhibits ADP-induced platelet aggregation in human platelet-rich plasma (IC(50) is 175 nM) and cleaves alpha-(FGA) and subsequently the beta-chain (FGG) of bovine fibrinogen, leaving the gamma-chain unaffected. It is also able to inhibit proliferatin of ECV304 cells by inducing apoptosis of these cells. The sequence is that of Zinc metalloproteinase-disintegrin stejnitin from Trimeresurus stejnegeri (Chinese green tree viper).